The primary structure comprises 258 residues: UPF0246 protein ABO_1338 (258 aa).

Belongs to the UPF0246 family.

This chain is UPF0246 protein ABO_1338, found in Alcanivorax borkumensis (strain ATCC 700651 / DSM 11573 / NCIMB 13689 / SK2).